Here is a 301-residue protein sequence, read N- to C-terminus: Movement protein (301 aa).

Disordered regions lie at residues 1–22 (MLTL…GPLV) and 282–301 (VEEE…FDEI). 2 essential for tubule formation and cell-to-cell movement regions span residues 19 to 159 (GPLV…NMPS) and 209 to 283 (GVSF…RSVE). The essential for long-distance movement stretch occupies residues 284–288 (EEEEG).

Belongs to the tospovirus movement protein family. Oligomerizes to form tubule structures through host plasmodesma. Interacts with host A.thaliana At4g26020 protein, which is involved in intra- and inter-cellular trafficking.

It is found in the host cell junction. The protein resides in the host plasmodesma. Functionally, viral movemement protein which is responsible for cell-to cell spread of viral genome. Increases the size exclusion limit (SEL) of plasmodesmata by forming tubules structures, thereby allowing viral ribonucleocapsids to spread directly to neighboring cells. This chain is Movement protein (NSM), found in Tomato spotted wilt virus (strain Brazilian Br-01) (TSWV).